A 486-amino-acid chain; its full sequence is Shutoff alkaline exonuclease (486 aa).

Belongs to the herpesviridae alkaline nuclease family. Forms a complex with the DNA polymerase, the DNA polymerase processivity factor, and the major DNA binding protein.

It localises to the host nucleus. It is found in the host cytoplasm. Functionally, plays a role in processing non linear or branched viral DNA intermediates in order to promote the production of mature packaged unit-length linear progeny viral DNA molecules. Exhibits endonuclease and exonuclease activities and accepts both double-stranded and single-stranded DNA as substrate. Exonuclease digestion of DNA is in the 5'-&gt; 3' direction and the products are 5'-monophosphate nucleosides. Additionally, forms a recombinase with the major DNA-binding protein, which displays strand exchange activity. Also acts as a cytoplasmic RNA endonuclease that induces degradation of the majority of the cellular messenger RNAs during early lytic infection. The resulting inhibition of cellular protein synthesis serves to ensure maximal viral gene expression and evasion from host immune response. Internally cleaves host mRNAs which are then degraded by the cellular exonuclease XRN1. Bypasses therefore the regulatory steps of deadenylation and decapping normally required for XRN1 activation. In addition, inhibits host inflammasome activation to promote viral lytic replication by interacting with host AIM2 and disrupting its polymerization. The chain is Shutoff alkaline exonuclease (ORF37) from Human herpesvirus 8 type P (isolate GK18) (HHV-8).